The sequence spans 142 residues: Small ribosomal subunit protein uS12 (142 aa).

The segment at 1–30 (MGKTHGMGAARKLKSHRRTQRWADKSYKKS) is disordered. Positions 11 to 20 (RKLKSHRRTQ) are enriched in basic residues. Positions 21 to 30 (RWADKSYKKS) are enriched in basic and acidic residues. The residue at position 61 (proline 61) is a Hydroxyproline.

Belongs to the universal ribosomal protein uS12 family.

The sequence is that of Small ribosomal subunit protein uS12 (RPS23) from Euphorbia esula (Leafy spurge).